Consider the following 312-residue polypeptide: Protein-methionine-sulfoxide reductase catalytic subunit MsrP (312 aa).

A signal peptide (tat-type signal) is located at residues 1–45 (MPVYRPPRIAASEITPERFFLDRRSFLAAAGGLVLGGTGMAHAAA). Mo-molybdopterin is bound by residues Asn-69, 72 to 73 (YE), Cys-126, Thr-161, Asn-211, Arg-216, and 227 to 229 (GIK).

Belongs to the MsrP family. In terms of assembly, heterodimer of a catalytic subunit (MsrP) and a heme-binding subunit (MsrQ). The cofactor is Mo-molybdopterin. In terms of processing, predicted to be exported by the Tat system. The position of the signal peptide cleavage has not been experimentally proven.

It localises to the periplasm. The catalysed reaction is L-methionyl-[protein] + a quinone + H2O = L-methionyl-(S)-S-oxide-[protein] + a quinol. It carries out the reaction L-methionyl-[protein] + a quinone + H2O = L-methionyl-(R)-S-oxide-[protein] + a quinol. Part of the MsrPQ system that repairs oxidized periplasmic proteins containing methionine sulfoxide residues (Met-O), using respiratory chain electrons. Thus protects these proteins from oxidative-stress damage caused by reactive species of oxygen and chlorine generated by the host defense mechanisms. MsrPQ is essential for the maintenance of envelope integrity under bleach stress, rescuing a wide series of structurally unrelated periplasmic proteins from methionine oxidation. The catalytic subunit MsrP is non-stereospecific, being able to reduce both (R-) and (S-) diastereoisomers of methionine sulfoxide. The chain is Protein-methionine-sulfoxide reductase catalytic subunit MsrP from Sinorhizobium fredii (strain NBRC 101917 / NGR234).